Consider the following 239-residue polypeptide: LexA repressor (239 aa).

Residues 26–46 constitute a DNA-binding region (H-T-H motif); that stretch reads FDEMKDALDLASKSGIHRLIT. A disordered region spans residues 80 to 108; it reads RRGFSPSVIEGSLGKPQPAAAPAPAKPVA. Active-site for autocatalytic cleavage activity residues include S159 and K197.

The protein belongs to the peptidase S24 family. Homodimer.

The enzyme catalyses Hydrolysis of Ala-|-Gly bond in repressor LexA.. In terms of biological role, represses a number of genes involved in the response to DNA damage (SOS response), including recA and lexA. In the presence of single-stranded DNA, RecA interacts with LexA causing an autocatalytic cleavage which disrupts the DNA-binding part of LexA, leading to derepression of the SOS regulon and eventually DNA repair. The sequence is that of LexA repressor from Rhizobium leguminosarum bv. trifolii (strain WSM2304).